Reading from the N-terminus, the 378-residue chain is SWI/SNF-related matrix-associated actin-dependent regulator of chromatin subfamily B member 1 (378 aa).

The tract at residues 1-106 (MIMALSKTFG…DEKYKAVSIS (106 aa)) is DNA-binding.

Belongs to the SNF5 family. As to quaternary structure, component of the multiprotein chromatin-remodeling complexes SWI/SNF. Component of neural progenitors-specific chromatin remodeling complex (npBAF complex) and the neuron-specific chromatin remodeling complex (nBAF complex). Component of the BAF (SWI/SNF) chromatin remodeling complex. Component of the SWI/SNF-B (PBAF) chromatin remodeling complex. Binds to double-stranded DNA.

Its subcellular location is the nucleus. Involved in chromatin-remodeling. Core component of the BAF (SWI/SNF) complex. This ATP-dependent chromatin-remodeling complex plays important roles in cell proliferation and differentiation, in cellular antiviral activities and inhibition of tumor formation. Belongs to the neural progenitors-specific chromatin remodeling complex (npBAF complex) and the neuron-specific chromatin remodeling complex (nBAF complex) and may play a role in neural development. This is SWI/SNF-related matrix-associated actin-dependent regulator of chromatin subfamily B member 1 (smarcb1) from Xenopus tropicalis (Western clawed frog).